The sequence spans 156 residues: MILNIDFIDETNEVTKEQMNIIEQLLNYAAEIEHVPSGAEVGISFVDNERIRIINRDYRGKDQPTDVISFALEEKGEGEVEIVDADIPPLLGDIIISIPKAKEQAKEYGHSFMRELGFLAVHGFLHLLGYDHKTEEEEKIMFSKQKDILERYGLTR.

The Zn(2+) site is built by histidine 122, histidine 126, and histidine 132.

Belongs to the endoribonuclease YbeY family. Zn(2+) serves as cofactor.

The protein localises to the cytoplasm. Single strand-specific metallo-endoribonuclease involved in late-stage 70S ribosome quality control and in maturation of the 3' terminus of the 16S rRNA. The protein is Endoribonuclease YbeY of Geobacillus sp. (strain WCH70).